The sequence spans 252 residues: 3-dehydroquinate dehydratase (252 aa).

Residues 47–49 (EWR) and Arg-83 each bind 3-dehydroquinate. The Proton donor/acceptor role is filled by His-144. Lys-171 serves as the catalytic Schiff-base intermediate with substrate. Arg-213, Ser-232, and Gln-236 together coordinate 3-dehydroquinate.

It belongs to the type-I 3-dehydroquinase family. As to quaternary structure, homodimer.

The enzyme catalyses 3-dehydroquinate = 3-dehydroshikimate + H2O. Its pathway is metabolic intermediate biosynthesis; chorismate biosynthesis; chorismate from D-erythrose 4-phosphate and phosphoenolpyruvate: step 3/7. Functionally, involved in the third step of the chorismate pathway, which leads to the biosynthesis of aromatic amino acids. Catalyzes the cis-dehydration of 3-dehydroquinate (DHQ) and introduces the first double bond of the aromatic ring to yield 3-dehydroshikimate. This Lactiplantibacillus plantarum (strain ATCC BAA-793 / NCIMB 8826 / WCFS1) (Lactobacillus plantarum) protein is 3-dehydroquinate dehydratase.